A 911-amino-acid polypeptide reads, in one-letter code: Translation initiation factor IF-2 (911 aa).

Basic and acidic residues-rich tracts occupy residues 80-94 (LEEQ…EQQL) and 101-113 (RPER…RTEV). Disordered regions lie at residues 80–142 (LEEQ…VSEP), 153–172 (VKSP…DVEG), and 195–309 (SSLG…KMRK). Basic and acidic residues predominate over residues 214 to 256 (KEQADELKDEFDIKAKEGGKEREAGGESRKPVKKGSEETKKTT). Residues 262-272 (AKKKKGKKKKK) are compositionally biased toward basic residues. Residues 273–284 (PEVDEKTIEKNI) are compositionally biased toward basic and acidic residues. The span at 286–300 (STISGMDDTSGSGSS) shows a compositional bias: low complexity. Residues 408–578 (IRPPVVTIMG…LTEAEIRELK (171 aa)) enclose the tr-type G domain. The G1 stretch occupies residues 417-424 (GHVDHGKT). 417-424 (GHVDHGKT) is a GTP binding site. The segment at 442-446 (GITQH) is G2. The interval 464–467 (DTPG) is G3. Residues 464–468 (DTPGH) and 518–521 (NKID) each bind GTP. The G4 stretch occupies residues 518–521 (NKID). Positions 554-556 (SAK) are G5.

Belongs to the TRAFAC class translation factor GTPase superfamily. Classic translation factor GTPase family. IF-2 subfamily.

Its subcellular location is the cytoplasm. One of the essential components for the initiation of protein synthesis. Protects formylmethionyl-tRNA from spontaneous hydrolysis and promotes its binding to the 30S ribosomal subunits. Also involved in the hydrolysis of GTP during the formation of the 70S ribosomal complex. The protein is Translation initiation factor IF-2 of Chlorobium phaeobacteroides (strain BS1).